The chain runs to 121 residues: D-ornithine 4,5-aminomutase subunit alpha (121 aa).

Heterotetramer of 2 alpha (OraS) and 2 beta (OraE) subunits.

It catalyses the reaction D-ornithine = (2R,4S)-2,4-diaminopentanoate. With respect to regulation, increased activity in the presence of dithiothreitol (DTT) in vitro. Inhibited by 1 mM potassium phosphate and potassium chloride. Inhibited by L-alpha-ornithine, D,L-alpha-lysine, L-beta-lysine (50%-60%), L-alpha-lysine (26%) and by delta-amino-n-valeric acid to a lesser extent. Significant decrease in activity is observed in the presence of 0.2 mM p-chloromercuribenzoate, N-ethylmaleimide and also by 2 mM iodoacetate to a lesser extent but not inhibited by arsenite. Its function is as follows. Component of a complex that catalyzes the reversible migration of the omega amino group of D-ornithine to C-4 to form (2R,4S)-2,4-diaminopentanoic acid. The role of OraS remains obscure; however, it seems to be required for a correct folding of the OraE subunit. The complex is active only on D-ornithine and 2,4-diaminopentanoic acid and not active on L-ornithine, L-beta-lysine, L-alpha-lysine or D-alpha-lysine. The chain is D-ornithine 4,5-aminomutase subunit alpha (oraS) from Acetoanaerobium sticklandii (strain ATCC 12662 / DSM 519 / JCM 1433 / CCUG 9281 / NCIMB 10654 / HF) (Clostridium sticklandii).